Consider the following 333-residue polypeptide: Nucleoid-associated protein APL_0429 (333 aa).

The protein belongs to the YejK family.

The protein resides in the cytoplasm. The protein localises to the nucleoid. The polypeptide is Nucleoid-associated protein APL_0429 (Actinobacillus pleuropneumoniae serotype 5b (strain L20)).